A 96-amino-acid chain; its full sequence is uncharacterized protein (96 aa).

This is an uncharacterized protein from Saccharomyces cerevisiae (strain ATCC 204508 / S288c) (Baker's yeast).